Here is a 160-residue protein sequence, read N- to C-terminus: Complexin-4 (160 aa).

Positions 14–44 (KNLGFGGGSEEKKEEGGTSDPAAAKGMTREE) are disordered. Cysteine 157 carries the post-translational modification Cysteine methyl ester. Cysteine 157 carries S-farnesyl cysteine lipidation. A propeptide spans 158–160 (SVM) (removed in mature form).

The protein belongs to the complexin/synaphin family. In terms of assembly, weakly binds to the SNARE core complex containing SNAP25, VAMP2 and STX1A. In terms of processing, farnesylation mediates presynaptic targeting and is important for function in neurotransmitter release. Present specifically in the retina (at protein level). Expressed in the outer nuclear layer of the retina (at protein level). Strongly expressed at rod photoreceptor ribbon synapses (at protein level). Not expressed at conventional amacrine cell synapses, nor at cone photoreceptor ribbon synapses (at protein level). Weakly expressed at cone photoreceptor synaptic terminals (at protein level). Not expressed in the brain (at protein level).

The protein localises to the synapse. Its subcellular location is the cell membrane. In terms of biological role, complexin that regulates SNARE protein complex-mediated synaptic vesicle fusion. Required for the maintenance of synaptic ultrastructure in the adult retina. Positively regulates synaptic transmission through synaptic vesicle availability and exocytosis of neurotransmitters at photoreceptor ribbon synapses in the retina. Suppresses tonic photoreceptor activity and baseline 'noise' by suppression of Ca(2+) vesicle tonic release and the facilitation of evoked synchronous and asynchronous Ca(2+) vesicle release. The protein is Complexin-4 (Cplx4) of Mus musculus (Mouse).